The sequence spans 347 residues: NADH-ubiquinone oxidoreductase chain 2 (347 aa).

The next 10 helical transmembrane spans lie at 13-33 (IILG…WIGF), 59-79 (YFLI…INLL), 84-104 (WAVS…ALAM), 111-131 (FHFW…LILL), 149-169 (IDPT…GWGG), 178-198 (IMAY…IYNP), 201-221 (TILN…LLII), 240-260 (IAII…LTGF), 276-296 (IALS…YTRL), and 326-346 (LSPL…MSAL).

Belongs to the complex I subunit 2 family. As to quaternary structure, core subunit of respiratory chain NADH dehydrogenase (Complex I) which is composed of 45 different subunits. Interacts with TMEM242.

It localises to the mitochondrion inner membrane. It catalyses the reaction a ubiquinone + NADH + 5 H(+)(in) = a ubiquinol + NAD(+) + 4 H(+)(out). Functionally, core subunit of the mitochondrial membrane respiratory chain NADH dehydrogenase (Complex I) that is believed to belong to the minimal assembly required for catalysis. Complex I functions in the transfer of electrons from NADH to the respiratory chain. The immediate electron acceptor for the enzyme is believed to be ubiquinone. The chain is NADH-ubiquinone oxidoreductase chain 2 from Chrotopterus auritus (Peters's woolly false vampire bat).